The primary structure comprises 277 residues: Carbonyl reductase [NADPH] 1 (277 aa).

NADP(+)-binding positions include 10 to 34 (VTGS…GEVV), 63 to 64 (DI), and N90. S30 is modified (phosphoserine). Residues 95-97 (FKV) and Q106 contribute to the glutathione site. S140 is a substrate binding site. 193 to 194 (AY) is a binding site for glutathione. The active-site Proton acceptor is the Y194. Residues 194-198 (YGVTK) and 231-233 (VRT) contribute to the NADP(+) site.

It belongs to the short-chain dehydrogenases/reductases (SDR) family. In terms of assembly, monomer.

It is found in the cytoplasm. It catalyses the reaction a secondary alcohol + NADP(+) = a ketone + NADPH + H(+). The catalysed reaction is prostaglandin F2alpha + NADP(+) = prostaglandin E2 + NADPH + H(+). It carries out the reaction prostaglandin E1 + NADP(+) = 15-oxoprostaglandin E1 + NADPH + H(+). The enzyme catalyses prostaglandin D2 + NADP(+) = 15-oxoprostaglandin D2 + NADPH + H(+). It catalyses the reaction menadione + NADPH + H(+) = menadiol + NADP(+). The catalysed reaction is prostaglandin E2 + NADP(+) = 15-oxoprostaglandin E2 + NADPH + H(+). It carries out the reaction prostaglandin F2alpha + NADP(+) = 15-oxoprostaglandin F2alpha + NADPH + H(+). The enzyme catalyses daunorubicin + NADPH + H(+) = 13-dihydrodaunorubicin + NADP(+). It catalyses the reaction S-nitrosoglutathione + NADPH + H(+) = S-(hydroxysulfenamide)glutathione + NADP(+). The catalysed reaction is a primary alcohol + NADP(+) = an aldehyde + NADPH + H(+). It carries out the reaction cortisol + NADPH + H(+) = 20beta-dihydrocortisol + NADP(+). The enzyme catalyses corticosterone + NADPH + H(+) = 20beta-dihydrocorticosterone + NADP(+). NADPH-dependent reductase with broad substrate specificity. Catalyzes the reduction of a wide variety of carbonyl compounds including quinones, prostaglandins, menadione, plus various xenobiotics. Catalyzes the reduction of the antitumor anthracyclines doxorubicin and daunorubicin to the cardiotoxic compounds doxorubicinol and daunorubicinol. Can convert prostaglandin E to prostaglandin F2-alpha. Can bind glutathione, which explains its higher affinity for glutathione-conjugated substrates. Catalyzes the reduction of S-nitrosoglutathione. In addition, participates in the glucocorticoid metabolism by catalyzing the NADPH-dependent cortisol/corticosterone into 20beta-dihydrocortisol (20b-DHF) or 20beta-corticosterone (20b-DHB), which are weak agonists of NR3C1 and NR3C2 in adipose tissue. This is Carbonyl reductase [NADPH] 1 from Macaca fascicularis (Crab-eating macaque).